A 984-amino-acid chain; its full sequence is Putative formate dehydrogenase SH0748 (984 aa).

A 2Fe-2S ferredoxin-type domain is found at 3-79; that stretch reads EHLIVTLDGT…PMTVNTQNND (77 aa). [2Fe-2S] cluster contacts are provided by Cys-37, Cys-48, Cys-51, and Cys-63. Residues 79-119 form the 4Fe-4S His(Cys)3-ligated-type domain; the sequence is DVKASQKEALDRILEKHMLYCTVCDYNNGDCEIHNAMDAWG. His-95, Cys-99, Cys-102, Cys-109, Cys-147, Cys-150, Cys-153, Cys-157, Cys-190, Cys-193, Cys-196, Cys-200, Cys-264, Cys-267, Cys-271, and Cys-299 together coordinate [4Fe-4S] cluster. 2 4Fe-4S ferredoxin-type domains span residues 138-165 and 181-211; these read PFYR…VNET and NDVP…VNME. The segment at 252–984 is formate dehydrogenase; the sequence is MRKERIKKTK…YVFPGNVVDK (733 aa). A 4Fe-4S Mo/W bis-MGD-type domain is found at 257–313; it reads IKKTKTVCTYCGVGCSFDVWTKDREVLKVQPSHDSPANKIATCVKGKFSWGHINSDQ.

In the C-terminal section; belongs to the prokaryotic molybdopterin-containing oxidoreductase family. It depends on [2Fe-2S] cluster as a cofactor. [4Fe-4S] cluster is required as a cofactor. The cofactor is Mo-bis(molybdopterin guanine dinucleotide).

The enzyme catalyses formate + NAD(+) = CO2 + NADH. The polypeptide is Putative formate dehydrogenase SH0748 (Staphylococcus haemolyticus (strain JCSC1435)).